A 457-amino-acid polypeptide reads, in one-letter code: tRNA-2-methylthio-N(6)-dimethylallyladenosine synthase (457 aa).

Residues 3–120 (KKVYVKTFGC…LPQMIDARRE (118 aa)) enclose the MTTase N-terminal domain. Cysteine 12, cysteine 49, cysteine 83, cysteine 157, cysteine 161, and cysteine 164 together coordinate [4Fe-4S] cluster. The region spanning 143–377 (RVEGPSAFVS…QATIEENVAR (235 aa)) is the Radical SAM core domain. Positions 380–447 (QSMVGKVERI…PHSLRGELVL (68 aa)) constitute a TRAM domain.

Belongs to the methylthiotransferase family. MiaB subfamily. As to quaternary structure, monomer. [4Fe-4S] cluster serves as cofactor.

It localises to the cytoplasm. It catalyses the reaction N(6)-dimethylallyladenosine(37) in tRNA + (sulfur carrier)-SH + AH2 + 2 S-adenosyl-L-methionine = 2-methylsulfanyl-N(6)-dimethylallyladenosine(37) in tRNA + (sulfur carrier)-H + 5'-deoxyadenosine + L-methionine + A + S-adenosyl-L-homocysteine + 2 H(+). In terms of biological role, catalyzes the methylthiolation of N6-(dimethylallyl)adenosine (i(6)A), leading to the formation of 2-methylthio-N6-(dimethylallyl)adenosine (ms(2)i(6)A) at position 37 in tRNAs that read codons beginning with uridine. The chain is tRNA-2-methylthio-N(6)-dimethylallyladenosine synthase from Burkholderia lata (strain ATCC 17760 / DSM 23089 / LMG 22485 / NCIMB 9086 / R18194 / 383).